The following is a 224-amino-acid chain: ATP-dependent dethiobiotin synthetase BioD (224 aa).

T18 serves as a coordination point for Mg(2+). The active site involves K39. S43 is a binding site for substrate. The Mg(2+) site is built by D56 and E117. Residues D56, 117 to 120, and 177 to 178 contribute to the ATP site; these read EGVG and NE.

The protein belongs to the dethiobiotin synthetase family. In terms of assembly, homodimer. The cofactor is Mg(2+).

The protein localises to the cytoplasm. It catalyses the reaction (7R,8S)-7,8-diammoniononanoate + CO2 + ATP = (4R,5S)-dethiobiotin + ADP + phosphate + 3 H(+). It participates in cofactor biosynthesis; biotin biosynthesis; biotin from 7,8-diaminononanoate: step 1/2. In terms of biological role, catalyzes a mechanistically unusual reaction, the ATP-dependent insertion of CO2 between the N7 and N8 nitrogen atoms of 7,8-diaminopelargonic acid (DAPA, also called 7,8-diammoniononanoate) to form a ureido ring. The protein is ATP-dependent dethiobiotin synthetase BioD of Xanthomonas euvesicatoria pv. vesicatoria (strain 85-10) (Xanthomonas campestris pv. vesicatoria).